Here is a 304-residue protein sequence, read N- to C-terminus: Probable aspartoacylase (304 aa).

The Zn(2+) site is built by H13 and E16. Substrate-binding positions include R55 and 62–63 (NR). H104 is a Zn(2+) binding site. Residues E162 and Y272 each contribute to the substrate site.

It belongs to the AspA/AstE family. Aspartoacylase subfamily. Zn(2+) is required as a cofactor.

The enzyme catalyses an N-acyl-L-aspartate + H2O = a carboxylate + L-aspartate. The polypeptide is Probable aspartoacylase (Synechococcus sp. (strain CC9605)).